The following is a 174-amino-acid chain: B3 domain-containing protein At2g31862 (174 aa).

Positions 1–71 form a DNA-binding region, TF-B3; sequence MWVNLSCMCH…KLYIALVPLD (71 aa).

The protein localises to the nucleus. The polypeptide is B3 domain-containing protein At2g31862 (Arabidopsis thaliana (Mouse-ear cress)).